A 1242-amino-acid chain; its full sequence is Membrane-associated phosphatidylinositol transfer protein 1 (1242 aa).

3 positions are modified to phosphothreonine: Thr-59, Thr-282, and Thr-287. The interval Cys-259–Leu-330 is disordered. Positions Gly-272–Thr-282 are enriched in polar residues. A compositionally biased stretch (low complexity) spans Ala-299 to Ser-319. Ser-300, Ser-304, Ser-319, Ser-326, Ser-329, Ser-342, Ser-345, Ser-346, and Ser-373 each carry phosphoserine. Ser-382 bears the Phosphoserine; by CDK1 mark. Residues Ala-581–Ser-593 are compositionally biased toward low complexity. The segment at Ala-581–Pro-678 is disordered. Ser-593, Ser-600, and Ser-621 each carry phosphoserine. Positions Gly-643–Ser-656 are enriched in polar residues. A DDHD domain is found at Leu-684–Glu-878. Ser-894 is modified (phosphoserine). The disordered stretch occupies residues Arg-1207–Glu-1242. Omega-N-methylarginine is present on Arg-1209. Ser-1235 is modified (phosphoserine).

Belongs to the PtdIns transfer protein family. PI transfer class IIA subfamily. As to quaternary structure, interacts with PIK4CA and VAPB. Interacts with PTK2B via its C-terminus. Interacts with RHOA. Has higher affinity for the inactive, GDP-bound form of RHOA. The CDK1-phosphorylated form interacts with PLK1. Post-translationally, phosphorylated on multiple sites by CDK1 at the onset of mitosis. Phosphorylation facilitates dissociation from the Golgi complex and is required for interaction with PLK1. In terms of processing, phosphorylated on threonine residues upon treatment with oleic acid. Phosphorylated on tyrosine residues by PTK2B.

The protein localises to the cytoplasm. The protein resides in the golgi apparatus. It is found in the golgi stack membrane. It localises to the endoplasmic reticulum membrane. Its subcellular location is the lipid droplet. The protein localises to the cleavage furrow. The protein resides in the midbody. It catalyses the reaction a 1,2-diacyl-sn-glycero-3-phospho-(1D-myo-inositol)(in) = a 1,2-diacyl-sn-glycero-3-phospho-(1D-myo-inositol)(out). Functionally, catalyzes the transfer of phosphatidylinositol (PI) between membranes. Binds PI, phosphatidylcholine (PC) and phosphatidic acid (PA) with the binding affinity order of PI &gt; PA &gt; PC. Regulates RHOA activity, and plays a role in cytoskeleton remodeling. Necessary for normal completion of cytokinesis. Plays a role in maintaining normal diacylglycerol levels in the Golgi apparatus. Necessary for maintaining the normal structure of the endoplasmic reticulum and the Golgi apparatus. Required for protein export from the endoplasmic reticulum and the Golgi. Binds calcium ions. This Rattus norvegicus (Rat) protein is Membrane-associated phosphatidylinositol transfer protein 1 (Pitpnm1).